Consider the following 27-residue polypeptide: L-amino-acid oxidase (27 aa).

In terms of assembly, homodimer; non-covalently linked. The cofactor is FAD. Contains 2 disulfide bonds. In terms of processing, N-glycosylated. In terms of tissue distribution, expressed by the venom gland.

The protein localises to the secreted. The catalysed reaction is an L-alpha-amino acid + O2 + H2O = a 2-oxocarboxylate + H2O2 + NH4(+). The enzyme catalyses L-leucine + O2 + H2O = 4-methyl-2-oxopentanoate + H2O2 + NH4(+). In terms of biological role, catalyzes an oxidative deamination of predominantly hydrophobic and aromatic L-amino acids, thus producing hydrogen peroxide that may contribute to the diverse toxic effects of this enzyme. Shows activity on L-Leu. Exhibits diverse biological activities, such as hemolysis, edema, apoptosis, as well as induction of platelet aggregation. Effects of snake L-amino oxidases on platelets are controversial, since they either induce aggregation or inhibit agonist-induced aggregation. These different effects are probably due to different experimental conditions. Unlike other snake venom L-amino acid oxidases, does not induce hemorrhage. This protein may also have antibacterial and antiparasitic activities. The chain is L-amino-acid oxidase from Eristicophis macmahoni (Leaf-nosed viper).